Consider the following 337-residue polypeptide: Delta-aminolevulinic acid dehydratase (337 aa).

The active-site Schiff-base intermediate with substrate is Lys-205. 5-aminolevulinate contacts are provided by Arg-215 and Lys-229. Glu-245 is a binding site for Mg(2+). Residue Lys-260 is the Schiff-base intermediate with substrate of the active site. Positions 286 and 324 each coordinate 5-aminolevulinate.

Belongs to the ALAD family. As to quaternary structure, homooctamer; formed by oligomerization of dimers. Mg(2+) serves as cofactor.

The catalysed reaction is 2 5-aminolevulinate = porphobilinogen + 2 H2O + H(+). The protein operates within porphyrin-containing compound metabolism; protoporphyrin-IX biosynthesis; coproporphyrinogen-III from 5-aminolevulinate: step 1/4. With respect to regulation, stimulated by magnesium ions. Functionally, catalyzes an early step in the biosynthesis of tetrapyrroles. Binds two molecules of 5-aminolevulinate per subunit, each at a distinct site, and catalyzes their condensation to form porphobilinogen. The chain is Delta-aminolevulinic acid dehydratase (hemB) from Pseudomonas aeruginosa (strain ATCC 15692 / DSM 22644 / CIP 104116 / JCM 14847 / LMG 12228 / 1C / PRS 101 / PAO1).